We begin with the raw amino-acid sequence, 296 residues long: N-acetylmuramic acid 6-phosphate etherase (296 aa).

An SIS domain is found at 54-217; that stretch reads VISCFQKGGR…STASMVGIGK (164 aa). The Proton donor role is filled by E82. E113 is a catalytic residue.

The protein belongs to the GCKR-like family. MurNAc-6-P etherase subfamily. As to quaternary structure, homodimer.

It carries out the reaction N-acetyl-D-muramate 6-phosphate + H2O = N-acetyl-D-glucosamine 6-phosphate + (R)-lactate. Its pathway is amino-sugar metabolism; N-acetylmuramate degradation. In terms of biological role, specifically catalyzes the cleavage of the D-lactyl ether substituent of MurNAc 6-phosphate, producing GlcNAc 6-phosphate and D-lactate. The chain is N-acetylmuramic acid 6-phosphate etherase from Listeria monocytogenes serotype 4b (strain CLIP80459).